Here is a 593-residue protein sequence, read N- to C-terminus: Methylenetetrahydrofolate reductase (NADH) 1 (593 aa).

The Proton donor/acceptor role is filled by E21. NAD(+) contacts are provided by residues 21 to 26 and 52 to 53; these read EYFPPK and TW. FAD contacts are provided by residues 52-53, H81, 111-113, Y153, 157-160, D175, and K182; these read TW, RGD, and HPDA. Position 113 (D113) interacts with substrate. Residues Q193 and Y285 each contribute to the substrate site.

It belongs to the methylenetetrahydrofolate reductase family. As to quaternary structure, homodimer. FAD serves as cofactor.

It carries out the reaction (6S)-5-methyl-5,6,7,8-tetrahydrofolate + NAD(+) = (6R)-5,10-methylene-5,6,7,8-tetrahydrofolate + NADH + H(+). Its pathway is one-carbon metabolism; tetrahydrofolate interconversion. With respect to regulation, plant MTHFRs strongly prefer NADH over NADPH. Not inhibited by methionine or S-adenosylmethionine. Its function is as follows. The probable reversibility of the MTHFR reaction in plants suggests that they can metabolize the methyl group of 5,10-methylenetetrahydrofolate to serine, sugars and starch. The protein is Methylenetetrahydrofolate reductase (NADH) 1 of Zea mays (Maize).